A 516-amino-acid polypeptide reads, in one-letter code: Levanbiose-producing levanase (516 aa).

Over methionine 1–lysine 5 the chain is Cytoplasmic. A helical membrane pass occupies residues alanine 6–phenylalanine 26. Over proline 27–glutamate 516 the chain is Extracellular. Substrate-binding positions include tryptophan 55–aspartate 58, tryptophan 116–threonine 117, arginine 181–aspartate 182, glutamate 230, and tryptophan 318. The active site involves aspartate 58.

It belongs to the glycosyl hydrolase 32 family.

The protein localises to the cell membrane. It catalyses the reaction Hydrolysis of (2-&gt;6)-beta-D-fructofuranan, to remove successive disaccharide residues as levanbiose, i.e. 6-(beta-D-fructofuranosyl)-D-fructose, from the end of the chain.. Catalyzes the degradation of levan mainly into levanbiose (difructose). Is not active on sucrose. The chain is Levanbiose-producing levanase (levB) from Bacillus subtilis (strain 168).